The sequence spans 429 residues: TNF receptor-associated factor family protein DDB_G0267744 (429 aa).

The RING-type; degenerate zinc-finger motif lies at 22–60 (CVICSHLQVDIYQCVEGHFACKNCFLKMIELKKQCMTCR). 2 TRAF-type zinc fingers span residues 151-203 (HHLK…GEFN) and 204-265 (NHQD…SNSE).

Belongs to the TNF receptor-associated factor family.

Its subcellular location is the cytoplasm. Probable adapter protein and signal transducer that links members of the tumor necrosis factor receptor family to different signaling pathways by association with the receptor cytoplasmic domain and kinases. The chain is TNF receptor-associated factor family protein DDB_G0267744 from Dictyostelium discoideum (Social amoeba).